Consider the following 214-residue polypeptide: External core antigen (214 aa).

A signal peptide spans 1-19 (MQLFHLCLIISCTCPTVQA). The segment at 25-27 (GWL) is HBEAG. The tract at residues 165 to 214 (NAPILSTLPETTVVRRRDRGRSPRRRTPSPRRRRSQSPRRRRSQSRESQC) is disordered. Basic residues predominate over residues 178–207 (VRRRDRGRSPRRRTPSPRRRRSQSPRRRRS). A 1; half-length repeat occupies 186-192 (SPRRRTP). Positions 186–208 (SPRRRTPSPRRRRSQSPRRRRSQ) are 3 X 8 AA repeats of S-P-R-R-R-R-S-Q. Positions 186-214 (SPRRRTPSPRRRRSQSPRRRRSQSRESQC) are excised as a propeptide. Tandem repeats lie at residues 193–200 (SPRRRRSQ) and 201–208 (SPRRRRSQ).

The protein belongs to the orthohepadnavirus precore antigen family. Homodimerizes. Phosphorylated. In terms of processing, cleaved by host furin.

It localises to the secreted. The protein resides in the host nucleus. May regulate immune response to the intracellular capsid in acting as a T-cell tolerogen, by having an immunoregulatory effect which prevents destruction of infected cells by cytotoxic T-cells. This immune regulation may predispose to chronicity during perinatal infections and prevent severe liver injury during adult infections. In Hepatitis B virus genotype A2 subtype adw2 (isolate Germany/991/1990) (HBV-A), this protein is External core antigen.